We begin with the raw amino-acid sequence, 564 residues long: Eukaryotic translation initiation factor 3 subunit L (564 aa).

S2 bears the N-acetylserine mark. The PCI domain maps to 331-537 (DAIRVFANIL…IHIADTKVAR (207 aa)). 2 positions are modified to N6-acetyllysine: K465 and K549.

The protein belongs to the eIF-3 subunit L family. Component of the eukaryotic translation initiation factor 3 (eIF-3) complex, which is composed of 13 subunits: EIF3A, EIF3B, EIF3C, EIF3D, EIF3E, EIF3F, EIF3G, EIF3H, EIF3I, EIF3J, EIF3K, EIF3L and EIF3M. The eIF-3 complex appears to include 3 stable modules: module A is composed of EIF3A, EIF3B, EIF3G and EIF3I; module B is composed of EIF3F, EIF3H, and EIF3M; and module C is composed of EIF3C, EIF3D, EIF3E, EIF3K and EIF3L. EIF3C of module C binds EIF3B of module A and EIF3H of module B, thereby linking the three modules. EIF3J is a labile subunit that binds to the eIF-3 complex via EIF3B. The eIF-3 complex interacts with RPS6KB1 under conditions of nutrient depletion. Mitogenic stimulation leads to binding and activation of a complex composed of MTOR and RPTOR, leading to phosphorylation and release of RPS6KB1 and binding of EIF4B to eIF-3. Interacts with RRN3.

It localises to the cytoplasm. Its function is as follows. Component of the eukaryotic translation initiation factor 3 (eIF-3) complex, which is required for several steps in the initiation of protein synthesis. The eIF-3 complex associates with the 40S ribosome and facilitates the recruitment of eIF-1, eIF-1A, eIF-2:GTP:methionyl-tRNAi and eIF-5 to form the 43S pre-initiation complex (43S PIC). The eIF-3 complex stimulates mRNA recruitment to the 43S PIC and scanning of the mRNA for AUG recognition. The eIF-3 complex is also required for disassembly and recycling of post-termination ribosomal complexes and subsequently prevents premature joining of the 40S and 60S ribosomal subunits prior to initiation. The eIF-3 complex specifically targets and initiates translation of a subset of mRNAs involved in cell proliferation, including cell cycling, differentiation and apoptosis, and uses different modes of RNA stem-loop binding to exert either translational activation or repression. The chain is Eukaryotic translation initiation factor 3 subunit L from Bos taurus (Bovine).